Reading from the N-terminus, the 119-residue chain is Small ribosomal subunit protein uS13 (119 aa).

The segment at 93–119 (RRGLPLRGQRTRSNARTRKGKRKPIRS) is disordered.

It belongs to the universal ribosomal protein uS13 family. As to quaternary structure, part of the 30S ribosomal subunit. Forms a loose heterodimer with protein S19. Forms two bridges to the 50S subunit in the 70S ribosome.

Located at the top of the head of the 30S subunit, it contacts several helices of the 16S rRNA. In the 70S ribosome it contacts the 23S rRNA (bridge B1a) and protein L5 of the 50S subunit (bridge B1b), connecting the 2 subunits; these bridges are implicated in subunit movement. Contacts the tRNAs in the A and P-sites. The chain is Small ribosomal subunit protein uS13 from Coxiella burnetii (strain RSA 493 / Nine Mile phase I).